The chain runs to 135 residues: Beta-galactoside-binding lectin (135 aa).

Residue Ser2 is modified to N-acetylserine. Cys3 and Cys8 form a disulfide bridge. A Galectin domain is found at 5–135; sequence GPVCTNLGLK…DFTLRSVSWE (131 aa). A beta-D-galactoside contacts are provided by residues 46–50, His54, Asn63, 70–73, and 70–76; these read HFNPR, WGTE, and WGTEQRE.

Homodimer; disulfide-linked. In terms of assembly, (Microbial infection) Interacts with newcastle disease virus protein HN; this interaction inhibits viral adsorption rather than internalization. In terms of tissue distribution, mainly in the intestine (adult), mainly in the skin (embryo).

This protein binds beta-galactoside. May participate in host antiviral defense through specific interaction with glycans on the viral envelope glycoproteins. The chain is Beta-galactoside-binding lectin (CG-1B) from Gallus gallus (Chicken).